A 679-amino-acid chain; its full sequence is MPAYELSAPYTPKGDQPTAISKLVEGVNGGERYQTLLGATGTGKTFTMANVIAQTGRPALVLAHNKTLAAQLCNELREFFPHNAVEYFISYYDYYQPEAYVPVSDTYIAKTASINEEIDMLRHSATRSLFERRDVIVVASISCIYGLGIPSEYLKAAVPFKVGETLNLRGSLRDLVNNQYSRNDTEAGRGRFRVKGDVLEIGPAYDDRLVRVELFGDEVEAIRYVDPTTGEILQSLDAISIYPAKHFVTPKERLNDAVKAIRSELKERLEFLNGEGKLLEAQRLEQRATYDLEMLQQIGYCNGVENYARHLAGREPGSAPECLIDYFPDDWLLIVDESHVTCSQLLAMYNGDQARKKVLIDHGFRLPSAADNRPLKSEEFWSKAKQTVFVSATPGNWEMEVSEGQVAEQVIRPTGVLDPLVEVRPTTGQVDDLLGEIRDRASKKQRVLVTTLTKRMAEDLTDYLAENKVRVRYLHSEIHSIERIEIIQDLRLGEYDVLVGVNLLREGLDLPEVSLVAILDADKEGFLRAQRSLIQTIGRAARHVEGKALLYAETMTDSMAKAIEETERRRKIQHTYNEKHGITPTAAGKKASNSILSFLELSRKLKADGPDADLVKVAGKAVQALEEDVDGLALDALPELIDQLELKMKESAKKLDFEEAANLRDRIKKLRQKLVGSSR.

Residues 25-176 (EGVNGGERYQ…NLRGSLRDLV (152 aa)) form the Helicase ATP-binding domain. ATP is bound at residue 38–45 (GATGTGKT). Positions 91–114 (YYDYYQPEAYVPVSDTYIAKTASI) match the Beta-hairpin motif. Positions 429 to 591 (QVDDLLGEIR…ITPTAAGKKA (163 aa)) constitute a Helicase C-terminal domain. The 36-residue stretch at 638–673 (PELIDQLELKMKESAKKLDFEEAANLRDRIKKLRQK) folds into the UVR domain.

Belongs to the UvrB family. Forms a heterotetramer with UvrA during the search for lesions. Interacts with UvrC in an incision complex.

The protein resides in the cytoplasm. The UvrABC repair system catalyzes the recognition and processing of DNA lesions. A damage recognition complex composed of 2 UvrA and 2 UvrB subunits scans DNA for abnormalities. Upon binding of the UvrA(2)B(2) complex to a putative damaged site, the DNA wraps around one UvrB monomer. DNA wrap is dependent on ATP binding by UvrB and probably causes local melting of the DNA helix, facilitating insertion of UvrB beta-hairpin between the DNA strands. Then UvrB probes one DNA strand for the presence of a lesion. If a lesion is found the UvrA subunits dissociate and the UvrB-DNA preincision complex is formed. This complex is subsequently bound by UvrC and the second UvrB is released. If no lesion is found, the DNA wraps around the other UvrB subunit that will check the other stand for damage. The chain is UvrABC system protein B from Synechococcus sp. (strain CC9311).